A 768-amino-acid chain; its full sequence is DNA replication licensing factor MCM3 homolog 1 (768 aa).

The 208-residue stretch at 290–497 (TFDLLGNSLA…IDRQISEHVA (208 aa)) folds into the MCM domain. An ATP-binding site is contributed by 340 to 347 (GDPSVAKS). Positions 472–475 (SRFD) match the Arginine finger motif. The disordered stretch occupies residues 662 to 687 (MKQQAEHDAGATGGTVDGHGSSGNDP). Positions 672–682 (ATGGTVDGHGS) are enriched in gly residues.

This sequence belongs to the MCM family.

The protein resides in the nucleus. It carries out the reaction ATP + H2O = ADP + phosphate + H(+). Acts as a factor that allows the DNA to undergo a single round of replication per cell cycle. Required for DNA replication and cell proliferation. May act as a component of the MCM complex which is the putative replicative helicase of the replication licensing system in eukaryotic cells. The polypeptide is DNA replication licensing factor MCM3 homolog 1 (ROA1) (Zea mays (Maize)).